The sequence spans 211 residues: Large ribosomal subunit protein uL3 (211 aa).

This sequence belongs to the universal ribosomal protein uL3 family. As to quaternary structure, part of the 50S ribosomal subunit. Forms a cluster with proteins L14 and L19.

Its function is as follows. One of the primary rRNA binding proteins, it binds directly near the 3'-end of the 23S rRNA, where it nucleates assembly of the 50S subunit. This Geotalea daltonii (strain DSM 22248 / JCM 15807 / FRC-32) (Geobacter daltonii) protein is Large ribosomal subunit protein uL3.